Reading from the N-terminus, the 79-residue chain is MSCSFHISSPLGSSSSLEGFSSLKVVVVACQALSRDLLGIDLVLLLLFWRPDKHPHWGFRHLCSQTDFWHEVVVFPIPN.

This is an uncharacterized protein from Saccharomyces cerevisiae (strain ATCC 204508 / S288c) (Baker's yeast).